The following is a 1892-amino-acid chain: Sodium channel protein type 4 subunit alpha A (1892 aa).

Topologically, residues 1-125 (MATILPPPGT…RGAIKILIHS (125 aa)) are cytoplasmic. Positions 34–54 (APKAGAHEEEEPPTPNPDLEA) are disordered. Residues 107 to 433 (ILSPFSLVRR…VVAMAYDEQN (327 aa)) form an I repeat. Residues 126 to 144 (LFSTLIMITILSNCVFMTM) traverse the membrane as a helical segment. Residues 145 to 151 (SNPPAWS) lie on the Extracellular side of the membrane. Residues 152–172 (KTVEYVFTGIYTFEATVKVLS) form a helical membrane-spanning segment. The Cytoplasmic portion of the chain corresponds to 173 to 186 (RGFCVGPFTFLRDP). A helical membrane pass occupies residues 187-204 (WNWLDFMVISMAYITEFV). The Extracellular portion of the chain corresponds to 205 to 210 (DLGNVS). An N-linked (GlcNAc...) asparagine glycan is attached at Asn208. The chain crosses the membrane as a helical span at residues 211 to 227 (ALRTFRVLRALKTITVI). Topologically, residues 228-246 (PGLKTIVAALIQSVKKMVD) are cytoplasmic. The chain crosses the membrane as a helical span at residues 247-266 (VMILTVFALAVFALVGLQLF). Residues 267–370 (MGNLRHKCIR…PNYGYTSFDS (104 aa)) are Extracellular-facing. Cysteines 274 and 339 form a disulfide. N-linked (GlcNAc...) asparagine glycosylation is found at Asn281, Asn294, and Asn341. Cys348 and Cys354 form a disulfide bridge. The segment at residues 371–395 (FGWAFLALFRLMTQDNWESLFQLTL) is an intramembrane region (pore-forming). The Extracellular portion of the chain corresponds to 396-402 (RAAGQTY). A helical membrane pass occupies residues 403-423 (MLFFVVVIFLGSFYLINLILA). At 424–612 (VVAMAYDEQN…KWVHFVVMDP (189 aa)) the chain is on the cytoplasmic side. One copy of the II repeat lies at 594-866 (CCEKWVVFKK…QIAIGRITRG (273 aa)). A helical membrane pass occupies residues 613–631 (FVDLAITICIVLNTLFMAM). At 632–642 (EHYPMTEEFDY) the chain is on the extracellular side. The chain crosses the membrane as a helical span at residues 643–662 (MLSVGNLVFTGIFAAEMFFK). The Cytoplasmic segment spans residues 663–676 (LIAMDPYYYFQVGW). Residues 677–696 (NIFDSIIVTLSLVELGLANV) form a helical membrane-spanning segment. Topologically, residues 697–698 (QG) are extracellular. A helical transmembrane segment spans residues 699 to 716 (LSVLRSFRLLRVFKLAKS). Topologically, residues 717-732 (WPTLNMLIKIIGNSVG) are cytoplasmic. A helical membrane pass occupies residues 733 to 751 (ALGNLTLVLAIIVFIFAVV). Topologically, residues 752–780 (GMQLFGKSYKDCVCKISSDCELPRWHMND) are extracellular. Cys765 and Cys771 form a disulfide bridge. The segment at residues 781–801 (FFHSFLIVFRILCGEWIETMW) is an intramembrane region (pore-forming). Residues 802-812 (DCMEVAGAGMC) lie on the Extracellular side of the membrane. A disulfide bond links Cys803 and Cys812. The helical transmembrane segment at 813–831 (LVVFMMVMVIGNLVVLNLF) threads the bilayer. The Cytoplasmic portion of the chain corresponds to 832-1071 (LALLLSSFSG…TCFTIVEHDW (240 aa)). Disordered stretches follow at residues 884-905 (REPQ…TEGM) and 945-982 (LGES…GVED). Acidic residues predominate over residues 948–971 (SDSENPSEDDDDQEDDVDSEVTCE). The stretch at 1052–1366 (KGKKWWNLRK…KKYYEAMKKL (315 aa)) is one III repeat. Residues 1072–1089 (FETFIIFMILLSSGALAF) traverse the membrane as a helical segment. The Extracellular segment spans residues 1090–1102 (EDIYIERRRTVKI). The chain crosses the membrane as a helical span at residues 1103–1121 (VLEFADKVFTFIFVIEMLL). The Cytoplasmic portion of the chain corresponds to 1122-1135 (KWVAYGFKTYFTNA). Residues 1136-1154 (WCWLDFFIVDISLISLSAN) form a helical membrane-spanning segment. Residues 1155–1162 (LMGFSDLG) lie on the Extracellular side of the membrane. A helical transmembrane segment spans residues 1163-1181 (PIKSLRTLRALRPLRALSR). Residues 1182–1198 (FEGMRVVVNALIGAIPS) are Cytoplasmic-facing. The chain crosses the membrane as a helical span at residues 1199-1218 (IFNVLLVCLIFWLIFSIMGV). The Extracellular segment spans residues 1219-1270 (NLFAGKFYRCINTTTAELFPISVVNNKSDCVALQEATQEARWVNVKVNYDNV). Cysteines 1228 and 1248 form a disulfide. Asn1230 and Asn1244 each carry an N-linked (GlcNAc...) asparagine glycan. An intramembrane region (pore-forming) is located at residues 1271–1292 (AKGYLSLLQIATFKGWMDIMYP). Residues 1293–1309 (AVDSREVEEQPSYEINL) lie on the Extracellular side of the membrane. Residues 1310–1331 (YMYIYFVIFIIFGSFFTLNLFI) traverse the membrane as a helical segment. The Cytoplasmic segment spans residues 1332–1394 (GVIIDNFNQQ…LVFDFISQQF (63 aa)). An important for rapid channel inactivation region spans residues 1350 to 1352 (IFM). Residues 1375 to 1673 (IPRPANLIQG…WEKFDTGGTQ (299 aa)) form an IV repeat. A helical membrane pass occupies residues 1395–1412 (FDIFIMVLICLNMVTMMV). Residues 1413 to 1423 (ETDDQSPAKED) are Extracellular-facing. A helical transmembrane segment spans residues 1424 to 1442 (FLFKVNVAFIVVFTGECTL). Topologically, residues 1443 to 1454 (KLFALRHYFFTN) are cytoplasmic. Residues 1455–1472 (GWNIFDFIVVILSIAGTM) form a helical membrane-spanning segment. The Extracellular portion of the chain corresponds to 1473 to 1485 (LSDIIEKYFVSPT). A helical transmembrane segment spans residues 1486 to 1502 (LFRVIRLARIGRILRLI). Topologically, residues 1503–1521 (KGARGIRTLLFALMMSLPA) are cytoplasmic. The chain crosses the membrane as a helical span at residues 1522–1539 (LFNIGLLLFLIMFIFSIF). Topologically, residues 1540-1561 (GMSNFAYVKKEAGINDMFNFET) are extracellular. The pore-forming intramembrane region spans 1562–1584 (FGSSIICLFQITTSAGWDTLLLP). The Extracellular portion of the chain corresponds to 1585–1614 (MLNKEPPDCDPAFENPGTDVKGNCGNPMMG). Cys1593 and Cys1608 are disulfide-bonded. A helical membrane pass occupies residues 1615-1637 (MVFFCSYIIISFLVVVNMYIAII). Topologically, residues 1638-1892 (LENFNVAQEE…TQTILRETNV (255 aa)) are cytoplasmic. The region spanning 1767 to 1796 (EDMAAVVIQRAYRNHLHKRGIHHAAYIQRS) is the IQ domain. The interval 1836–1856 (RRRPDPQTRCSGARCSPEPPE) is disordered.

It belongs to the sodium channel (TC 1.A.1.10) family. Nav1.4/SCN4A subfamily. Voltage-gated sodium (Nav) channels consist of an ion-conducting alpha subunit which is functional on its own associated with regulatory beta subunits.

The protein resides in the cell membrane. The enzyme catalyses Na(+)(in) = Na(+)(out). In terms of biological role, pore-forming subunit of a voltage-gated sodium (Nav) channel that directly mediates the depolarizing phase of action potentials in excitable membranes. Navs, also called VGSCs (voltage-gated sodium channels) or VDSCs (voltage-dependent sodium channels), operate by switching between closed and open conformations depending on the voltage difference across the membrane. In the open conformation they allow Na(+) ions to selectively pass through the pore, along their electrochemical gradient. The influx of Na+ ions provokes membrane depolarization, initiating the propagation of electrical signals throughout cells and tissues. This chain is Sodium channel protein type 4 subunit alpha A (scn4aa), found in Takifugu rubripes (Japanese pufferfish).